Consider the following 359-residue polypeptide: Guanine nucleotide-binding protein G(o) subunit alpha (359 aa).

The interval 1 to 26 (MGGCVSATPEEREAKTRSSVIDRQQR) is disordered. Gly-2 carries the N-myristoyl glycine lipid modification. A lipid anchor (S-palmitoyl cysteine) is attached at Cys-4. A G-alpha domain is found at 34-359 (NTIKILLLGA…RENLEAANLL (326 aa)). The interval 37-50 (KILLLGAGESGKST) is G1 motif. GTP is bound by residues 42 to 49 (GAGESGKS), 178 to 184 (LRSRVQT), 203 to 207 (DVGGQ), 272 to 275 (NKAD), and Ala-331. Ser-49 and Thr-184 together coordinate Mg(2+). The segment at 176 to 184 (DVLRSRVQT) is G2 motif. Residues 199 to 208 (YRVVDVGGQR) form a G3 motif region. Residues 268–275 (ILFLNKAD) form a G4 motif region. Residues 329–334 (TTATDT) form a G5 motif region.

Belongs to the G-alpha family. G(i/o/t/z) subfamily. G proteins are composed of 3 units; alpha, beta and gamma. The alpha chain contains the guanine nucleotide binding site.

Functionally, guanine nucleotide-binding proteins (G proteins) are involved as modulators or transducers in various transmembrane signaling systems. The G(o) protein function is not clear. This is Guanine nucleotide-binding protein G(o) subunit alpha from Geodia cydonium (Sponge).